The chain runs to 352 residues: Phosphoribosylformylglycinamidine cyclo-ligase (352 aa).

This sequence belongs to the AIR synthase family.

It is found in the cytoplasm. It catalyses the reaction 2-formamido-N(1)-(5-O-phospho-beta-D-ribosyl)acetamidine + ATP = 5-amino-1-(5-phospho-beta-D-ribosyl)imidazole + ADP + phosphate + H(+). Its pathway is purine metabolism; IMP biosynthesis via de novo pathway; 5-amino-1-(5-phospho-D-ribosyl)imidazole from N(2)-formyl-N(1)-(5-phospho-D-ribosyl)glycinamide: step 2/2. This chain is Phosphoribosylformylglycinamidine cyclo-ligase, found in Pseudomonas fluorescens (strain ATCC BAA-477 / NRRL B-23932 / Pf-5).